A 59-amino-acid polypeptide reads, in one-letter code: MENIIVTQVKSSIGVKKEHKLTLHALGLRRTGQQRKHKVSPQLQGMLNSVRHLIKVEKA.

This sequence belongs to the universal ribosomal protein uL30 family. As to quaternary structure, part of the 50S ribosomal subunit.

This chain is Large ribosomal subunit protein uL30, found in Leptospira interrogans serogroup Icterohaemorrhagiae serovar copenhageni (strain Fiocruz L1-130).